Reading from the N-terminus, the 329-residue chain is Beta-ribofuranosylphenol 5'-phosphate synthase (329 aa).

It belongs to the beta-RFA-P synthase family. In terms of assembly, homodimer. Mg(2+) is required as a cofactor.

It carries out the reaction 5-phospho-alpha-D-ribose 1-diphosphate + 4-hydroxybenzoate + H(+) = 4-(beta-D-ribofuranosyl)phenol 5'-phosphate + CO2 + diphosphate. The catalysed reaction is 4-aminobenzoate + 5-phospho-alpha-D-ribose 1-diphosphate + H(+) = 4-(beta-D-ribofuranosyl)aminobenzene 5'-phosphate + CO2 + diphosphate. Its pathway is cofactor biosynthesis; 5,6,7,8-tetrahydromethanopterin biosynthesis. In terms of biological role, catalyzes the condensation of 4-hydroxybenzoate (HB) with 5-phospho-alpha-D-ribose 1-diphosphate (PRPP) to produce beta-ribofuranosylphenol 5'-phosphate (beta-RFH-P). Also catalyzes the condensation of 4-aminobenzoate (pABA) with PRPP to produce beta-ribofuranosylaminobenzene 5'-phosphate (beta-RFA-P). Only 4-hydroxybenzoate is known to be biosynthesized by methanogenic archaea, but 4-aminobenzoate can be used as substrate by growing methanogens when it is present in the growth medium. This Methanothermobacter thermautotrophicus (strain ATCC 29096 / DSM 1053 / JCM 10044 / NBRC 100330 / Delta H) (Methanobacterium thermoautotrophicum) protein is Beta-ribofuranosylphenol 5'-phosphate synthase.